We begin with the raw amino-acid sequence, 63 residues long: Large ribosomal subunit protein uL29 (63 aa).

This sequence belongs to the universal ribosomal protein uL29 family.

The chain is Large ribosomal subunit protein uL29 from Sulfurovum sp. (strain NBC37-1).